The following is a 447-amino-acid chain: METKQIQETINMVEEEHLDIRTVTMGISLLDTIAGDPQQTAKNIYKKVTTYAKDLIKVAEQIEREYGIPITNKRISVTPIALIAGHATPDDMLYYAHALDDAAKAVGVDFIGGYSALVQKGFANGDLALIKSLPRALTETDLVMSSVNIGSTKAGINLDAIKLMGETVKGISEKSDTANAKLVIFANAVEDNPFMAGAFHGVSEADVVINVGVSGPGVVKRALEKVKGESIQVVAETVKKTAFKITRVGQMVGALAAERLGVEFGIVDLSLAPTPARGDSVAEVLEEIGLEQVGTHGTTAALMLLNDAVKKGGVMASQRVGGLSGAFIPVSEDAGMIDAAKEGTLTLSKLEAMTAVCSVGLDMIAIPGDTSATTISAMIADEAAIGVQNNKTTAVRILPTLGTKVGDMVDYGGLLGTAPVMPVVEKSSADFINRGGHIPAPIHSFKN.

It belongs to the UPF0210 family. Homodimer.

This is UPF0210 protein LEUM_1180 from Leuconostoc mesenteroides subsp. mesenteroides (strain ATCC 8293 / DSM 20343 / BCRC 11652 / CCM 1803 / JCM 6124 / NCDO 523 / NBRC 100496 / NCIMB 8023 / NCTC 12954 / NRRL B-1118 / 37Y).